The primary structure comprises 700 residues: Elongation factor G (700 aa).

Residues 8-290 enclose the tr-type G domain; that stretch reads ERYRNIGISA…AVVEYLPSPV (283 aa). GTP-binding positions include 17–24, 88–92, and 142–145; these read AHIDAGKT, DTPGH, and NKMD.

It belongs to the TRAFAC class translation factor GTPase superfamily. Classic translation factor GTPase family. EF-G/EF-2 subfamily.

It is found in the cytoplasm. Functionally, catalyzes the GTP-dependent ribosomal translocation step during translation elongation. During this step, the ribosome changes from the pre-translocational (PRE) to the post-translocational (POST) state as the newly formed A-site-bound peptidyl-tRNA and P-site-bound deacylated tRNA move to the P and E sites, respectively. Catalyzes the coordinated movement of the two tRNA molecules, the mRNA and conformational changes in the ribosome. This is Elongation factor G from Mannheimia succiniciproducens (strain KCTC 0769BP / MBEL55E).